The following is a 418-amino-acid chain: MMYRTVGFGTRSRNLKPWMIAVLIVLSLTVVAVTIGLLVHFLVFDQKKEYYHGSFKILDPQINNNFGQSNTYQLKDLRETTENLVDEIFIDSAWKKNYIKNQVVRLTPEEDGVKVDVIMVFQFPSTEQRAVREKKIQSILNQKIRNLRALPINASSVQVNAMSSSTGELTVQASCGKRVVPLNVNRIASGVIAPKAAWPWQASLQYDNIHQCGATLISNTWLVTAAHCFQKYKNPHQWTVSFGTKINPPLMKRNVRRFIIHEKYRSAAREYDIAVVQVSSRVTFSDDIRQICLPEASASFQPNLTVHITGFGALYYGGESQNDLREARVKIISDDVCKQPQVYGNDIKPGMFCAGYMEGIYDACRGDSGGPLVTRDLKDTWYLIGIVSWGDNCGQKDKPGVYTQVTYYRNWIASKTGI.

Residues 1–18 lie on the Cytoplasmic side of the membrane; sequence MMYRTVGFGTRSRNLKPW. A helical; Signal-anchor for type II membrane protein transmembrane segment spans residues 19-39; that stretch reads MIAVLIVLSLTVVAVTIGLLV. At 40 to 418 the chain is on the extracellular side; it reads HFLVFDQKKE…RNWIASKTGI (379 aa). In terms of domain architecture, SEA spans 47 to 164; it reads KKEYYHGSFK…SSVQVNAMSS (118 aa). Asparagine 153 carries N-linked (GlcNAc...) asparagine glycosylation. In terms of domain architecture, Peptidase S1 spans 187 to 417; sequence IASGVIAPKA…YRNWIASKTG (231 aa). An intrachain disulfide couples cysteine 212 to cysteine 228. Catalysis depends on charge relay system residues histidine 227 and aspartate 272. Asparagine 303 carries an N-linked (GlcNAc...) asparagine glycan. 2 disulfides stabilise this stretch: cysteine 337–cysteine 353 and cysteine 364–cysteine 393. Serine 368 (charge relay system) is an active-site residue.

Belongs to the peptidase S1 family. May interact with ZBTB17. As to expression, expressed in esophagus, liver, colon and lung. Down-regulated in esophagus cancers.

The protein resides in the membrane. Probable serine protease which may play a role in cellular senescence. Overexpression inhibits cell growth and induce G1 cell cycle arrest. The protein is Transmembrane protease serine 11A (TMPRSS11A) of Homo sapiens (Human).